Here is a 468-residue protein sequence, read N- to C-terminus: 6-phospho-beta-galactosidase (468 aa).

D-galactose 6-phosphate-binding residues include glutamine 19, histidine 116, asparagine 159, glutamate 160, and asparagine 297. Glutamate 160 serves as the catalytic Proton donor. Glutamate 375 (nucleophile) is an active-site residue. Serine 428, tryptophan 429, lysine 435, and tyrosine 437 together coordinate D-galactose 6-phosphate.

The protein belongs to the glycosyl hydrolase 1 family.

The enzyme catalyses a 6-phospho-beta-D-galactoside + H2O = D-galactose 6-phosphate + an alcohol. It functions in the pathway carbohydrate metabolism; lactose degradation; D-galactose 6-phosphate and beta-D-glucose from lactose 6-phosphate: step 1/1. In Streptococcus pyogenes serotype M12 (strain MGAS2096), this protein is 6-phospho-beta-galactosidase.